The following is a 1070-amino-acid chain: DNA-directed RNA polymerase subunit beta (1070 aa).

Belongs to the RNA polymerase beta chain family. As to quaternary structure, in plastids the minimal PEP RNA polymerase catalytic core is composed of four subunits: alpha, beta, beta', and beta''. When a (nuclear-encoded) sigma factor is associated with the core the holoenzyme is formed, which can initiate transcription.

The protein resides in the plastid. It is found in the chloroplast. The enzyme catalyses RNA(n) + a ribonucleoside 5'-triphosphate = RNA(n+1) + diphosphate. Its function is as follows. DNA-dependent RNA polymerase catalyzes the transcription of DNA into RNA using the four ribonucleoside triphosphates as substrates. The protein is DNA-directed RNA polymerase subunit beta of Populus trichocarpa (Western balsam poplar).